A 312-amino-acid polypeptide reads, in one-letter code: Glyoxylate/hydroxypyruvate reductase A (312 aa).

The active site involves Arg227. His275 acts as the Proton donor in catalysis.

The protein belongs to the D-isomer specific 2-hydroxyacid dehydrogenase family. GhrA subfamily.

Its subcellular location is the cytoplasm. It carries out the reaction glycolate + NADP(+) = glyoxylate + NADPH + H(+). It catalyses the reaction (R)-glycerate + NAD(+) = 3-hydroxypyruvate + NADH + H(+). The catalysed reaction is (R)-glycerate + NADP(+) = 3-hydroxypyruvate + NADPH + H(+). Its function is as follows. Catalyzes the NADPH-dependent reduction of glyoxylate and hydroxypyruvate into glycolate and glycerate, respectively. This is Glyoxylate/hydroxypyruvate reductase A from Salmonella enteritidis PT4 (strain P125109).